The primary structure comprises 238 residues: UPF0280 protein Msm_0088 (238 aa).

It belongs to the UPF0280 family.

This chain is UPF0280 protein Msm_0088, found in Methanobrevibacter smithii (strain ATCC 35061 / DSM 861 / OCM 144 / PS).